A 127-amino-acid polypeptide reads, in one-letter code: Major sperm protein 78 (127 aa).

Residue alanine 2 is modified to N-acetylalanine. The MSP domain maps to 9–126 (DIQTQPGTKI…RRKNLPIEYN (118 aa)).

As to expression, sperm.

The protein localises to the cell projection. It is found in the pseudopodium. It localises to the cytoplasm. Its subcellular location is the cytoskeleton. Central component in molecular interactions underlying sperm crawling. Forms an extensive filament system that extends from sperm villipoda, along the leading edge of the pseudopod. This Caenorhabditis elegans protein is Major sperm protein 78 (msp-78).